The sequence spans 102 residues: Small ribosomal subunit protein bS18 (102 aa).

Belongs to the bacterial ribosomal protein bS18 family. Part of the 30S ribosomal subunit. Forms a tight heterodimer with protein bS6.

Its function is as follows. Binds as a heterodimer with protein bS6 to the central domain of the 16S rRNA, where it helps stabilize the platform of the 30S subunit. This chain is Small ribosomal subunit protein bS18, found in Orientia tsutsugamushi (strain Boryong) (Rickettsia tsutsugamushi).